We begin with the raw amino-acid sequence, 69 residues long: Putative membrane protein insertion efficiency factor (69 aa).

This sequence belongs to the UPF0161 family.

The protein resides in the cell inner membrane. Its function is as follows. Could be involved in insertion of integral membrane proteins into the membrane. In Aromatoleum aromaticum (strain DSM 19018 / LMG 30748 / EbN1) (Azoarcus sp. (strain EbN1)), this protein is Putative membrane protein insertion efficiency factor.